Here is a 97-residue protein sequence, read N- to C-terminus: Large ribosomal subunit protein bL28 (97 aa).

Belongs to the bacterial ribosomal protein bL28 family.

This Rickettsia canadensis (strain McKiel) protein is Large ribosomal subunit protein bL28.